Here is a 501-residue protein sequence, read N- to C-terminus: Glycerol kinase (501 aa).

An ADP-binding site is contributed by Thr17. Residues Thr17, Thr18, and Ser19 each coordinate ATP. Thr17 serves as a coordination point for sn-glycerol 3-phosphate. ADP is bound at residue Arg21. Sn-glycerol 3-phosphate-binding residues include Arg87, Glu88, Tyr139, and Asp243. The glycerol site is built by Arg87, Glu88, Tyr139, Asp243, and Gln244. Residues Thr265 and Gly308 each contribute to the ADP site. Residues Thr265, Gly308, Gln312, and Gly409 each contribute to the ATP site. Residues Gly409 and Asn413 each contribute to the ADP site.

The protein belongs to the FGGY kinase family.

It carries out the reaction glycerol + ATP = sn-glycerol 3-phosphate + ADP + H(+). It participates in polyol metabolism; glycerol degradation via glycerol kinase pathway; sn-glycerol 3-phosphate from glycerol: step 1/1. Inhibited by fructose 1,6-bisphosphate (FBP). In terms of biological role, key enzyme in the regulation of glycerol uptake and metabolism. Catalyzes the phosphorylation of glycerol to yield sn-glycerol 3-phosphate. This Pseudomonas fluorescens (strain SBW25) protein is Glycerol kinase.